The sequence spans 223 residues: Adenylate kinase (223 aa).

Residue 17–22 (GAGKGT) participates in ATP binding. The interval 37–66 (STGDMLRSQVAKGTPLGVEAKKIMDQGGLV) is NMP. Residues Thr-38, Arg-43, 64 to 66 (GLV), 93 to 96 (GFPR), and Gln-100 each bind AMP. An LID region spans residues 134 to 171 (GRLVHPSSGRSYHKLFNPPKVEMTDDVTGEPLVQRSDD). ATP is bound by residues Arg-135 and 144 to 145 (SY). The AMP site is built by Arg-168 and Arg-179. Gln-207 serves as a coordination point for ATP.

It belongs to the adenylate kinase family. AK2 subfamily. As to quaternary structure, monomer.

The protein localises to the cytoplasm. Its subcellular location is the cytosol. It localises to the mitochondrion intermembrane space. It catalyses the reaction AMP + ATP = 2 ADP. Its function is as follows. Catalyzes the reversible transfer of the terminal phosphate group between ATP and AMP. Plays an important role in cellular energy homeostasis and in adenine nucleotide metabolism. Adenylate kinase activity is critical for regulation of the phosphate utilization and the AMP de novo biosynthesis pathways. In Vanderwaltozyma polyspora (strain ATCC 22028 / DSM 70294 / BCRC 21397 / CBS 2163 / NBRC 10782 / NRRL Y-8283 / UCD 57-17) (Kluyveromyces polysporus), this protein is Adenylate kinase.